We begin with the raw amino-acid sequence, 105 residues long: Precursor of CEP15 (105 aa).

An N-terminal signal peptide occupies residues 1-29; that stretch reads MDATKIKFDVILLSFLLIISGIPSNLGLS. A propeptide spanning residues 30–90 is cleaved from the precursor; it reads TSVRGTTRSE…PSPPVPDYDD (61 aa). Residues 68 to 80 show a composition bias toward low complexity; the sequence is DYYDGGSSSSTTS. The segment at 68-105 is disordered; it reads DYYDGGSSSSTTSPSPPVPDYDDIYRRQGDVPSPGIGH. 2 positions are modified to hydroxyproline: Pro99 and Pro101.

The protein belongs to the C-terminally encoded plant signaling peptide (CEP) family. As to quaternary structure, interacts with CEP receptors (e.g. CEPR1 and CEPR2). Post-translationally, the mature small signaling peptide is generated by proteolytic processing of the longer precursor.

The protein localises to the secreted. Its subcellular location is the extracellular space. It is found in the apoplast. Extracellular signaling peptide that may regulate primary root growth rate and systemic nitrogen (N)-demand signaling. This chain is Precursor of CEP15, found in Arabidopsis thaliana (Mouse-ear cress).